The sequence spans 403 residues: Phosphopentomutase (403 aa).

Mn(2+)-binding residues include Asp13, Asp298, His303, Asp339, His340, and His351.

Belongs to the phosphopentomutase family. Mn(2+) serves as cofactor.

Its subcellular location is the cytoplasm. The catalysed reaction is 2-deoxy-alpha-D-ribose 1-phosphate = 2-deoxy-D-ribose 5-phosphate. The enzyme catalyses alpha-D-ribose 1-phosphate = D-ribose 5-phosphate. It functions in the pathway carbohydrate degradation; 2-deoxy-D-ribose 1-phosphate degradation; D-glyceraldehyde 3-phosphate and acetaldehyde from 2-deoxy-alpha-D-ribose 1-phosphate: step 1/2. Functionally, isomerase that catalyzes the conversion of deoxy-ribose 1-phosphate (dRib-1-P) and ribose 1-phosphate (Rib-1-P) to deoxy-ribose 5-phosphate (dRib-5-P) and ribose 5-phosphate (Rib-5-P), respectively. The chain is Phosphopentomutase from Streptococcus pyogenes serotype M5 (strain Manfredo).